The primary structure comprises 151 residues: 3-hydroxyacyl-[acyl-carrier-protein] dehydratase FabZ (151 aa).

Residue H54 is part of the active site.

The protein belongs to the thioester dehydratase family. FabZ subfamily.

Its subcellular location is the cytoplasm. The catalysed reaction is a (3R)-hydroxyacyl-[ACP] = a (2E)-enoyl-[ACP] + H2O. In terms of biological role, involved in unsaturated fatty acids biosynthesis. Catalyzes the dehydration of short chain beta-hydroxyacyl-ACPs and long chain saturated and unsaturated beta-hydroxyacyl-ACPs. The chain is 3-hydroxyacyl-[acyl-carrier-protein] dehydratase FabZ from Buchnera aphidicola subsp. Acyrthosiphon pisum (strain 5A).